Consider the following 151-residue polypeptide: MLRTSLTKGARLTGTRFVQTKALSKATLTDLPERWENMPNLEQKEIADNLTERQKLPWKTLNNEEIKAAWYISYGEWGPRRPVHGKGDVAFITKGVFLGLGISFGLFGLVRLLANPETPKTMNREWQLKSDEYLKSKNANPWGGYSQVQSK.

Residues 1–17 constitute a mitochondrion transit peptide; it reads MLRTSLTKGARLTGTRF. The Mitochondrial matrix portion of the chain corresponds to 18-85; sequence VQTKALSKAT…EWGPRRPVHG (68 aa). The helical transmembrane segment at 86–108 threads the bilayer; that stretch reads KGDVAFITKGVFLGLGISFGLFG. Topologically, residues 109–151 are mitochondrial intermembrane; that stretch reads LVRLLANPETPKTMNREWQLKSDEYLKSKNANPWGGYSQVQSK.

It belongs to the cytochrome c oxidase IV family. Component of the cytochrome c oxidase (complex IV, CIV), a multisubunit enzyme composed of 12 subunits. The complex is composed of a catalytic core of 3 subunits COX1, COX2 and COX3, encoded in the mitochondrial DNA, and 9 supernumerary subunits COX4, COX5A (or COX5B), COX6, COX7, COX8, COX9, COX12, COX13 and COX26, which are encoded in the nuclear genome. COX5A is the predominant subunit V during aerobic/normoxic growth, it gets replaced by COX5B under anaerobic/hypoxic conditions. The complex exists as a monomer or a dimer and forms supercomplexes (SCs) in the inner mitochondrial membrane with a dimer of ubiquinol-cytochrome c oxidoreductase (cytochrome b-c1 complex, complex III, CIII), resulting in 2 different assemblies (supercomplexes III(2)IV and III(2)IV(2)).

Its subcellular location is the mitochondrion inner membrane. It functions in the pathway energy metabolism; oxidative phosphorylation. Its function is as follows. Component of the cytochrome c oxidase, the last enzyme in the mitochondrial electron transport chain which drives oxidative phosphorylation. The respiratory chain contains 3 multisubunit complexes succinate dehydrogenase (complex II, CII), ubiquinol-cytochrome c oxidoreductase (cytochrome b-c1 complex, complex III, CIII) and cytochrome c oxidase (complex IV, CIV), that cooperate to transfer electrons derived from NADH and succinate to molecular oxygen, creating an electrochemical gradient over the inner membrane that drives transmembrane transport and the ATP synthase. Cytochrome c oxidase is the component of the respiratory chain that catalyzes the reduction of oxygen to water. Electrons originating from reduced cytochrome c in the intermembrane space (IMS) are transferred via the dinuclear copper A center (CU(A)) of COX2 and heme A of COX1 to the active site in COX1, a binuclear center (BNC) formed by heme A3 and copper B (CU(B)). The BNC reduces molecular oxygen to 2 water molecules using 4 electrons from cytochrome c in the IMS and 4 protons from the mitochondrial matrix. In Saccharomyces cerevisiae (strain ATCC 204508 / S288c) (Baker's yeast), this protein is Cytochrome c oxidase subunit 5B, mitochondrial (COX5B).